The primary structure comprises 249 residues: Diphthine synthase (249 aa).

Residues Asp-83, Leu-86, 111–112 (SI), Leu-163, and Leu-205 contribute to the S-adenosyl-L-methionine site.

Belongs to the diphthine synthase family. As to quaternary structure, homodimer.

It catalyses the reaction 2-[(3S)-amino-3-carboxypropyl]-L-histidyl-[translation elongation factor 2] + 3 S-adenosyl-L-methionine = diphthine-[translation elongation factor 2] + 3 S-adenosyl-L-homocysteine + 3 H(+). The protein operates within protein modification; peptidyl-diphthamide biosynthesis. Functionally, S-adenosyl-L-methionine-dependent methyltransferase that catalyzes the trimethylation of the amino group of the modified target histidine residue in translation elongation factor 2 (EF-2), to form an intermediate called diphthine. The three successive methylation reactions represent the second step of diphthamide biosynthesis. This Pyrobaculum islandicum (strain DSM 4184 / JCM 9189 / GEO3) protein is Diphthine synthase.